Consider the following 235-residue polypeptide: UPF0758 protein A1S_2918 (235 aa).

The interval 1–20 (MNTSIKNWPEQERPRERLLQ) is disordered. Residues 9–18 (PEQERPRERL) show a composition bias toward basic and acidic residues. Residues 105–227 (SLHSSHLVLD…SFSFAEQQLL (123 aa)) enclose the MPN domain. Histidine 176, histidine 178, and aspartate 189 together coordinate Zn(2+). Residues 176–189 (HNHPFGSPQPSPED) carry the JAMM motif motif.

Belongs to the UPF0758 family.

This is UPF0758 protein A1S_2918 from Acinetobacter baumannii (strain ATCC 17978 / DSM 105126 / CIP 53.77 / LMG 1025 / NCDC KC755 / 5377).